The sequence spans 78 residues: D-alanyl carrier protein (78 aa).

The region spanning 1-78 (MAFRENVLEI…MIITQLEALK (78 aa)) is the Carrier domain. Serine 36 carries the post-translational modification O-(pantetheine 4'-phosphoryl)serine.

It belongs to the DltC family. Post-translationally, 4'-phosphopantetheine is transferred from CoA to a specific serine of apo-DCP.

Its subcellular location is the cytoplasm. Its pathway is cell wall biogenesis; lipoteichoic acid biosynthesis. Its function is as follows. Carrier protein involved in the D-alanylation of lipoteichoic acid (LTA). The loading of thioester-linked D-alanine onto DltC is catalyzed by D-alanine--D-alanyl carrier protein ligase DltA. The DltC-carried D-alanyl group is further transferred to cell membrane phosphatidylglycerol (PG) by forming an ester bond, probably catalyzed by DltD. D-alanylation of LTA plays an important role in modulating the properties of the cell wall in Gram-positive bacteria, influencing the net charge of the cell wall. This is D-alanyl carrier protein from Listeria monocytogenes serotype 4a (strain HCC23).